Here is a 39-residue protein sequence, read N- to C-terminus: Photosystem II reaction center protein L (39 aa).

A helical membrane pass occupies residues isoleucine 18–phenylalanine 38.

The protein belongs to the PsbL family. PSII is composed of 1 copy each of membrane proteins PsbA, PsbB, PsbC, PsbD, PsbE, PsbF, PsbH, PsbI, PsbJ, PsbK, PsbL, PsbM, PsbT, PsbX, PsbY, PsbZ, Psb30/Ycf12, at least 3 peripheral proteins of the oxygen-evolving complex and a large number of cofactors. It forms dimeric complexes.

The protein resides in the plastid membrane. In terms of biological role, one of the components of the core complex of photosystem II (PSII). PSII is a light-driven water:plastoquinone oxidoreductase that uses light energy to abstract electrons from H(2)O, generating O(2) and a proton gradient subsequently used for ATP formation. It consists of a core antenna complex that captures photons, and an electron transfer chain that converts photonic excitation into a charge separation. This subunit is found at the monomer-monomer interface and is required for correct PSII assembly and/or dimerization. This Cuscuta pentagona (Five-angled dodder) protein is Photosystem II reaction center protein L.